Reading from the N-terminus, the 220-residue chain is 2-hydroxy-3-keto-5-methylthiopentenyl-1-phosphate phosphatase (220 aa).

The protein belongs to the HAD-like hydrolase superfamily. MtnX family.

It carries out the reaction 2-hydroxy-5-methylsulfanyl-3-oxopent-1-enyl phosphate + H2O = 1,2-dihydroxy-5-(methylsulfanyl)pent-1-en-3-one + phosphate. It participates in amino-acid biosynthesis; L-methionine biosynthesis via salvage pathway; L-methionine from S-methyl-5-thio-alpha-D-ribose 1-phosphate: step 4/6. In terms of biological role, dephosphorylates 2-hydroxy-3-keto-5-methylthiopentenyl-1-phosphate (HK-MTPenyl-1-P) yielding 1,2-dihydroxy-3-keto-5-methylthiopentene (DHK-MTPene). The sequence is that of 2-hydroxy-3-keto-5-methylthiopentenyl-1-phosphate phosphatase from Geobacillus kaustophilus (strain HTA426).